A 321-amino-acid polypeptide reads, in one-letter code: Putative ribose-phosphate pyrophosphokinase 2 (321 aa).

ATP contacts are provided by residues 43 to 45 (DGE) and 102 to 103 (RQ). Positions 136 and 176 each coordinate Mg(2+). Residue Asp225 coordinates D-ribose 5-phosphate.

This sequence belongs to the ribose-phosphate pyrophosphokinase family. Class I subfamily. As to quaternary structure, homohexamer. Requires Mg(2+) as cofactor.

It is found in the cytoplasm. The enzyme catalyses D-ribose 5-phosphate + ATP = 5-phospho-alpha-D-ribose 1-diphosphate + AMP + H(+). It participates in metabolic intermediate biosynthesis; 5-phospho-alpha-D-ribose 1-diphosphate biosynthesis; 5-phospho-alpha-D-ribose 1-diphosphate from D-ribose 5-phosphate (route I): step 1/1. In terms of biological role, involved in the biosynthesis of the central metabolite phospho-alpha-D-ribosyl-1-pyrophosphate (PRPP) via the transfer of pyrophosphoryl group from ATP to 1-hydroxyl of ribose-5-phosphate (Rib-5-P). This is Putative ribose-phosphate pyrophosphokinase 2 from Lactiplantibacillus plantarum (strain ATCC BAA-793 / NCIMB 8826 / WCFS1) (Lactobacillus plantarum).